A 208-amino-acid polypeptide reads, in one-letter code: Sodium/potassium-transporting ATPase subunit beta-1-interacting protein 4 (208 aa).

3 helical membrane-spanning segments follow: residues A35–I55, V62–F82, and C151–F171.

It belongs to the NKAIN family. In terms of assembly, interacts with ATP1B1.

The protein resides in the cell membrane. This chain is Sodium/potassium-transporting ATPase subunit beta-1-interacting protein 4 (NKAIN4), found in Homo sapiens (Human).